A 252-amino-acid polypeptide reads, in one-letter code: Putative pinene synthase (252 aa).

The protein belongs to the terpene synthase family. Tpsa subfamily.

The sequence is that of Putative pinene synthase from Fragaria ananassa (Strawberry).